Here is a 411-residue protein sequence, read N- to C-terminus: Methylthioribose-1-phosphate isomerase (411 aa).

Ser2 bears the N-acetylserine mark. The Proton donor role is filled by Asp280. Residue Ser351 is modified to Phosphoserine.

This sequence belongs to the eIF-2B alpha/beta/delta subunits family. MtnA subfamily. In terms of assembly, homodimer.

The protein resides in the cytoplasm. The protein localises to the nucleus. The catalysed reaction is 5-(methylsulfanyl)-alpha-D-ribose 1-phosphate = 5-(methylsulfanyl)-D-ribulose 1-phosphate. It functions in the pathway amino-acid biosynthesis; L-methionine biosynthesis via salvage pathway; L-methionine from S-methyl-5-thio-alpha-D-ribose 1-phosphate: step 1/6. Functionally, catalyzes the interconversion of methylthioribose-1-phosphate (MTR-1-P) into methylthioribulose-1-phosphate (MTRu-1-P). The chain is Methylthioribose-1-phosphate isomerase from Saccharomyces cerevisiae (strain JAY291) (Baker's yeast).